Consider the following 71-residue polypeptide: Protein SlyX homolog (71 aa).

This sequence belongs to the SlyX family.

In Thioalkalivibrio sulfidiphilus (strain HL-EbGR7), this protein is Protein SlyX homolog.